The following is a 320-amino-acid chain: ATP-dependent 6-phosphofructokinase (320 aa).

Gly-12 serves as a coordination point for ATP. ADP-binding positions include 22–26 (RGVVR) and 55–60 (RYSVSD). ATP contacts are provided by residues 73–74 (RF) and 103–106 (GDGS). Residue Asp-104 participates in Mg(2+) binding. 126 to 128 (TID) contributes to the substrate binding site. Asp-128 acts as the Proton acceptor in catalysis. Residue Arg-155 coordinates ADP. Residues Arg-163 and 170 to 172 (MGR) each bind substrate. Residues 186–188 (GCE), Lys-212, and 214–216 (KKH) contribute to the ADP site. Substrate-binding positions include Glu-223, Arg-244, and 250–253 (HIQR).

It belongs to the phosphofructokinase type A (PFKA) family. ATP-dependent PFK group I subfamily. Prokaryotic clade 'B1' sub-subfamily. Homotetramer. Mg(2+) is required as a cofactor.

The protein localises to the cytoplasm. The catalysed reaction is beta-D-fructose 6-phosphate + ATP = beta-D-fructose 1,6-bisphosphate + ADP + H(+). It participates in carbohydrate degradation; glycolysis; D-glyceraldehyde 3-phosphate and glycerone phosphate from D-glucose: step 3/4. Allosterically activated by ADP and other diphosphonucleosides, and allosterically inhibited by phosphoenolpyruvate. Functionally, catalyzes the phosphorylation of D-fructose 6-phosphate to fructose 1,6-bisphosphate by ATP, the first committing step of glycolysis. This chain is ATP-dependent 6-phosphofructokinase, found in Buchnera aphidicola subsp. Acyrthosiphon pisum (strain 5A).